The sequence spans 60 residues: Large ribosomal subunit protein bL32 (60 aa).

Belongs to the bacterial ribosomal protein bL32 family.

This is Large ribosomal subunit protein bL32 from Hydrogenobaculum sp. (strain Y04AAS1).